A 277-amino-acid chain; its full sequence is Nickel import ATP-binding protein NikE (277 aa).

The ABC transporter domain occupies Y14 to R253. G46–S53 is an ATP binding site.

This sequence belongs to the ABC transporter superfamily. Nickel importer (TC 3.A.1.5.3) family. The complex is composed of two ATP-binding proteins (NikD and NikE), two transmembrane proteins (NikB and NikC) and a solute-binding protein (NikA).

Its subcellular location is the cell inner membrane. The enzyme catalyses Ni(2+)(out) + ATP + H2O = Ni(2+)(in) + ADP + phosphate + H(+). Its function is as follows. Part of the ABC transporter complex NikABCDE involved in nickel import. Responsible for energy coupling to the transport system. The protein is Nickel import ATP-binding protein NikE of Rhodospirillum rubrum (strain ATCC 11170 / ATH 1.1.1 / DSM 467 / LMG 4362 / NCIMB 8255 / S1).